The following is a 132-amino-acid chain: Small ribosomal subunit protein uS8 (132 aa).

The protein belongs to the universal ribosomal protein uS8 family. In terms of assembly, part of the 30S ribosomal subunit. Contacts proteins S5 and S12.

One of the primary rRNA binding proteins, it binds directly to 16S rRNA central domain where it helps coordinate assembly of the platform of the 30S subunit. The protein is Small ribosomal subunit protein uS8 of Acetivibrio thermocellus (strain ATCC 27405 / DSM 1237 / JCM 9322 / NBRC 103400 / NCIMB 10682 / NRRL B-4536 / VPI 7372) (Clostridium thermocellum).